A 183-amino-acid polypeptide reads, in one-letter code: Cuticle protein 2 (183 aa).

A signal peptide spans 1–15 (MKLIVVAALIGVCAG). Positions 58 to 121 (SQGFQYVYDT…AQGAHLPTPP (64 aa)) constitute a Chitin-binding type R&amp;R domain.

The sequence is that of Cuticle protein 2 from Lonomia obliqua (Moth).